We begin with the raw amino-acid sequence, 152 residues long: Small ribosomal subunit protein bS6 (152 aa).

This sequence belongs to the bacterial ribosomal protein bS6 family.

In terms of biological role, binds together with bS18 to 16S ribosomal RNA. The polypeptide is Small ribosomal subunit protein bS6 (Bdellovibrio bacteriovorus (strain ATCC 15356 / DSM 50701 / NCIMB 9529 / HD100)).